The sequence spans 296 residues: Glycine--tRNA ligase alpha subunit (296 aa).

The protein belongs to the class-II aminoacyl-tRNA synthetase family. As to quaternary structure, tetramer of two alpha and two beta subunits.

The protein localises to the cytoplasm. The catalysed reaction is tRNA(Gly) + glycine + ATP = glycyl-tRNA(Gly) + AMP + diphosphate. The sequence is that of Glycine--tRNA ligase alpha subunit from Listeria monocytogenes serotype 4a (strain HCC23).